Reading from the N-terminus, the 287-residue chain is MDEIVKNIREGTHVLLPFYETLPELNLSLGKSPLPSLEYGANYFLQISRVNDLNRMPTDMLKLFTHDIMLPESDLDKVYEILKINSVKYYGRSTRADAVVADLSARNKLFKRERDAIKSNNHLTENNLYISDYKMLTFDVFRPLFDFVNEKYCIIKLPTLFGRGVIDTMRIYCSLFKNVRLLKCVSDSWLKDSAIMVASDVYKKNLDLFMSHVKSVTKSSSWKDVNTVQFSILNDPVDTEFINKFLEFSNRVYEALYYVHSLLYSSMTSDSKSIENKHQRRLVKLLL.

Belongs to the orthopoxvirus mRNA-capping enzyme regulatory subunit family. Interacts with the late transcription elongation factor VLTF-4/OPG110. Interacts with the late transcription factors VLTF-1.

The protein localises to the virion. In terms of biological role, acts with RNA polymerase to initiate transcription from late gene promoters. This is mRNA-capping enzyme regulatory subunit OPG124 (OPG124) from Monkeypox virus.